A 212-amino-acid polypeptide reads, in one-letter code: Uracil phosphoribosyltransferase (212 aa).

Residues R78, R103, and 130–138 (DPMLATGGS) each bind 5-phospho-alpha-D-ribose 1-diphosphate. Uracil-binding positions include I193 and 198-200 (GDA). D199 is a 5-phospho-alpha-D-ribose 1-diphosphate binding site.

The protein belongs to the UPRTase family. Requires Mg(2+) as cofactor.

The catalysed reaction is UMP + diphosphate = 5-phospho-alpha-D-ribose 1-diphosphate + uracil. The protein operates within pyrimidine metabolism; UMP biosynthesis via salvage pathway; UMP from uracil: step 1/1. Its activity is regulated as follows. Allosterically activated by GTP. In terms of biological role, catalyzes the conversion of uracil and 5-phospho-alpha-D-ribose 1-diphosphate (PRPP) to UMP and diphosphate. The sequence is that of Uracil phosphoribosyltransferase from Stutzerimonas stutzeri (strain A1501) (Pseudomonas stutzeri).